Consider the following 216-residue polypeptide: ATP-dependent Clp protease proteolytic subunit (216 aa).

The Nucleophile role is filled by Ser120. Residue His145 is part of the active site.

The protein belongs to the peptidase S14 family. As to quaternary structure, fourteen ClpP subunits assemble into 2 heptameric rings which stack back to back to give a disk-like structure with a central cavity, resembling the structure of eukaryotic proteasomes.

The protein resides in the cytoplasm. It catalyses the reaction Hydrolysis of proteins to small peptides in the presence of ATP and magnesium. alpha-casein is the usual test substrate. In the absence of ATP, only oligopeptides shorter than five residues are hydrolyzed (such as succinyl-Leu-Tyr-|-NHMec, and Leu-Tyr-Leu-|-Tyr-Trp, in which cleavage of the -Tyr-|-Leu- and -Tyr-|-Trp bonds also occurs).. Cleaves peptides in various proteins in a process that requires ATP hydrolysis. Has a chymotrypsin-like activity. Plays a major role in the degradation of misfolded proteins. This chain is ATP-dependent Clp protease proteolytic subunit, found in Cupriavidus pinatubonensis (strain JMP 134 / LMG 1197) (Cupriavidus necator (strain JMP 134)).